The following is a 498-amino-acid chain: Cytochrome P450 monooxygenase aflU (498 aa).

The chain crosses the membrane as a helical span at residues 5–27 (TVYTSLIGLLVALTVRSIYRVYF). Asn-259 and Asn-354 each carry an N-linked (GlcNAc...) asparagine glycan. Cys-438 is a binding site for heme.

Belongs to the cytochrome P450 family. Heme is required as a cofactor.

It localises to the membrane. It functions in the pathway mycotoxin biosynthesis; aflatoxin biosynthesis. Cytochrome P450 monooxygenase; part of the gene cluster that mediates the biosynthesis of aflatoxins, a group of polyketide-derived furanocoumarins, and part of the most toxic and carcinogenic compounds among the known mycotoxins. The four major aflatoxins produced by A.parasiticus are aflatoxin B1 (AFB1), aflatoxin B2 (AFB2), aflatoxin G1 (AFG1) and aflatoxin G2 (AFG2). Within the aflatoxin pathway, the cytochrome P450 monooxygenase aflU is involved in the last steps in which OMST is converted to aflatoxins B1 and G1, and DHOMST to aflatoxins B2 and G2. The biosynthesis of aflatoxins begins with the norsolorinic acid synthase aflC that combines a hexanoyl starter unit produced by the fatty acid synthase aflA/aflB and 7 malonyl-CoA extender units to synthesize the precursor NOR. The second step is the conversion of NOR to averantin and requires the norsolorinic acid ketoreductase aflD, which catalyzes the dehydration of norsolorinic acid to form (1'S)-averantin. The norsolorinic acid reductases aflE and aflF may also play a role in the conversion of NOR to AVN. The cytochrome P450 monooxygenase aflG then catalyzes the hydroxylation of AVN to 5'hydroxyaverantin (HAVN). The next step is performed by the 5'-hydroxyaverantin dehydrogenase aflH that transforms HAVN to 5'-oxoaverantin (OAVN) which is further converted to averufin (AVF) by aflK that plays a dual role in the pathway, as a 5'-oxoaverantin cyclase that mediates conversion of 5'-oxoaverantin, as well as a versicolorin B synthase in a later step in the pathway. The averufin oxidase aflI catalyzes the conversion of AVF to versiconal hemiacetal acetate (VHA). VHA is then the substrate for the versiconal hemiacetal acetate esterase aflJ to yield versiconal (VAL). Versicolorin B synthase aflK then converts VAL to versicolorin B (VERB) by closing the bisfuran ring of aflatoxin which is required for DNA-binding, thus giving to aflatoxin its activity as a mutagen. Then, the activity of the versicolorin B desaturase aflL leads to versicolorin A (VERA). A branch point starts from VERB since it can also be converted to dihydrodemethylsterigmatocystin (DMDHST), probably also by aflL, VERA being a precursor for aflatoxins B1 and G1, and DMDHST for aflatoxins B2 and G2. Next, the versicolorin reductase aflM and the cytochrome P450 monooxygenase aflN are involved in conversion of VERA to demethylsterigmatocystin (DMST). AflX and aflY seem also involved in this step, through probable aflX-mediated epoxide ring-opening step following versicolorin A oxidation and aflY-mediated Baeyer-Villiger oxidation required for the formation of the xanthone ring. The methyltransferase aflO then leads to the modification of DMST to sterigmatocystin (ST), and of DMDHST to dihydrosterigmatocystin (DHST). Both ST and DHST are then substrates of the O-methyltransferase aflP to yield O-methylsterigmatocystin (OMST) and dihydro-O-methylsterigmatocystin (DHOMST), respectively. Finally OMST is converted to aflatoxins B1 and G1, and DHOMST to aflatoxins B2 and G2, via the action of several enzymes including O-methylsterigmatocystin oxidoreductase aflQ, the cytochrome P450 monooxygenase aflU, but also the NADH-dependent flavin oxidoreductase nadA which is specifically required for the synthesis of AFG1. The protein is Cytochrome P450 monooxygenase aflU of Aspergillus parasiticus (strain ATCC 56775 / NRRL 5862 / SRRC 143 / SU-1).